Reading from the N-terminus, the 647-residue chain is MLRVPLCTPLPLLALLQLLGAAHGIYNVTQRTFKLDYSRDRFLKDGQPFRYISGSIHYFRIPRFYWEDRLLKMKMAGLNAIQMYVPWNFHEPQPGQYEFSGDRDVEHFIQLAHELGLLVILRPGPYICAEWDMGGLPAWLLEKQSIVLRSSDPDYLVAVDKWLAVLLPKMKPLLYQNGGPIITVQVENEYGSYFACDYDYLRFLVHRFRYHLGNDVILFTTDGASEKMLKCGTLQDLYATVDFGTGNNITQAFLVQRKFEPKGPLINSEFYTGWLDHWGKPHSTVKTKTLATSLYNLLARGANVNLYMFIGGTNFAYWNGANTPYEPQPTSYDYDAPLSEAGDLTKKYFALREVIQMFKEVPEGPIPPSTPKFAYGKVALRKFKTVAEALGILCPNGPVKSLYPLTFTQVKQYFGYVLYRTTLPQDCSNPKPIFSSPFNGVRDRAYVSVDGVPQGILDRNLMTALNIRGKAGATLDILVENMGRVNYGRFINDFKGLISNMTINSTVLTNWTVFPLNTEAMVRNHLWGREASDEGHLDGRSTSNSSDLILPTFYVGNFSIPSGIPDLPQDTFIQFPGWSKGQVWINGFNLGRYWPTMGPQKTLFVPRNILTTSAPNNITVLELEFAPCSEGTPELCTVEFVDTPVIS.

The signal sequence occupies residues 1–24 (MLRVPLCTPLPLLALLQLLGAAHG). Positions 25–29 (IYNVT) are excised as a propeptide. The N-linked (GlcNAc...) asparagine glycan is linked to asparagine 27. Substrate-binding residues include tyrosine 84, glutamate 130, and asparagine 188. Glutamate 189 acts as the Proton donor in catalysis. An intrachain disulfide couples cysteine 196 to cysteine 231. N-linked (GlcNAc...) asparagine glycosylation occurs at asparagine 248. Glutamate 269 serves as the catalytic Nucleophile. Tyrosine 334 contacts substrate. Residues asparagine 500, asparagine 504, asparagine 510, asparagine 544, asparagine 557, and asparagine 617 are each glycosylated (N-linked (GlcNAc...) asparagine). An intrachain disulfide couples cysteine 628 to cysteine 636.

This sequence belongs to the glycosyl hydrolase 35 family. In terms of assembly, homodimer. May form higher multimers.

It localises to the lysosome. It catalyses the reaction Hydrolysis of terminal non-reducing beta-D-galactose residues in beta-D-galactosides.. In terms of biological role, cleaves beta-linked terminal galactosyl residues from gangliosides, glycoproteins, and glycosaminoglycans. This is Beta-galactosidase (Glb1) from Mus musculus (Mouse).